A 421-amino-acid chain; its full sequence is Esterase LipQ (421 aa).

Residues serine 249, aspartate 344, and histidine 377 contribute to the active site.

Belongs to the 'GDXG' lipolytic enzyme family.

It carries out the reaction hexadecanoate ester + H2O = an aliphatic alcohol + hexadecanoate + H(+). Functionally, shows lipase activity. Is highly immunogenic and may play an important role in the virulence and pathogenesis of M.tuberculosis infection, by altering the balance of cytokines. Significantly down-regulates the expression level of pro-inflammatory cytokines (TNF-alpha and IFN-gamma) and up-regulates the level of anti-inflammatory cytokines such as IL-4 and IL-10 as compared to LPS stimulated macrophages. Also inhibits the expression of iNOS, TLR2 and transcription factor NF-kappa-B in LPS stimulated macrophages whereas the expression of TLR-4 remains unchanged. This chain is Esterase LipQ, found in Mycobacterium tuberculosis (strain ATCC 25618 / H37Rv).